A 565-amino-acid polypeptide reads, in one-letter code: Polyadenylate-binding protein 1-A (565 aa).

4 RRM domains span residues 10 to 88 (SSLY…WSQR), 98 to 175 (GNVF…PFKS), 188 to 265 (TNVF…RAQK), and 284 to 362 (VNLY…LAQR). The interval 435–466 (YARGQPRQNGPRQNGGQPRQNGPRPDVSGAQP) is disordered. Residues 440–454 (PRQNGPRQNGGQPRQ) show a composition bias toward polar residues. In terms of domain architecture, PABC spans 489–565 (SALNLQSIIN…REALEVLGSN (77 aa)).

It belongs to the polyadenylate-binding protein type-1 family.

It localises to the cytoplasm. It is found in the nucleus. Binds the poly(A) tail of mRNA. Appears to be an important mediator of the multiple roles of the poly(A) tail in mRNA biogenesis, stability and translation. This is Polyadenylate-binding protein 1-A (pabpc1A) from Dictyostelium discoideum (Social amoeba).